The sequence spans 216 residues: Leucyl/phenylalanyl-tRNA--protein transferase (216 aa).

This sequence belongs to the L/F-transferase family.

The protein localises to the cytoplasm. It carries out the reaction N-terminal L-lysyl-[protein] + L-leucyl-tRNA(Leu) = N-terminal L-leucyl-L-lysyl-[protein] + tRNA(Leu) + H(+). The enzyme catalyses N-terminal L-arginyl-[protein] + L-leucyl-tRNA(Leu) = N-terminal L-leucyl-L-arginyl-[protein] + tRNA(Leu) + H(+). It catalyses the reaction L-phenylalanyl-tRNA(Phe) + an N-terminal L-alpha-aminoacyl-[protein] = an N-terminal L-phenylalanyl-L-alpha-aminoacyl-[protein] + tRNA(Phe). In terms of biological role, functions in the N-end rule pathway of protein degradation where it conjugates Leu, Phe and, less efficiently, Met from aminoacyl-tRNAs to the N-termini of proteins containing an N-terminal arginine or lysine. In Maricaulis maris (strain MCS10) (Caulobacter maris), this protein is Leucyl/phenylalanyl-tRNA--protein transferase.